A 521-amino-acid chain; its full sequence is Occludin (521 aa).

The tract at residues 1–20 (MSVRPFESPPPYRPDEFKPN) is disordered. The Cytoplasmic portion of the chain corresponds to 1 to 66 (MSVRPFESPP…KWTSPPGVIR (66 aa)). The MARVEL domain maps to 60-267 (SPPGVIRILS…IIFFAVKTRR (208 aa)). The chain crosses the membrane as a helical span at residues 67–89 (ILSMLIIVMCIAIFACVASTLAW). The Extracellular segment spans residues 90–133 (DRGYGTGLFGGSLNYPYSGFGYGGGYGGGYGGYGYGYGGYTDPR). Residues 134–158 (AAKGFLLAMAAFCFIASLVIFVTSV) form a helical membrane-spanning segment. The Cytoplasmic segment spans residues 159–168 (IRSGMSRTRR). Residues 169–193 (YYLIVIIVSAILGIMVFIATIVYIM) form a helical membrane-spanning segment. At 194–241 (GVNPTAQASGSMYGSQIYMICNQFYTPGGTGLYVDQYLYHYCVVDPQE) the chain is on the extracellular side. Cys-214 and Cys-235 are disulfide-bonded. The helical transmembrane segment at 242–263 (AIAIVLGFMIIVAFALIIFFAV) threads the bilayer. Residues 264 to 521 (KTRRKMDRYD…MVGDYDRRKP (258 aa)) are Cytoplasmic-facing. Ser-300 bears the Phosphoserine mark. The disordered stretch occupies residues 300–329 (SAGTQDMPPPPSDYAERVDSPMAYSSNGKV). Thr-303 is subject to Phosphothreonine. 2 positions are modified to phosphoserine: Ser-311 and Ser-319. A Phosphoserine; by PKC; in vitro modification is found at Ser-338. Residue Ser-358 is modified to Phosphoserine. The disordered stretch occupies residues 361–405 (DFRQPRYSSNGNLETPSKRAPTKGKAGKGKRTDPDHYETDYTTGG). Positions 366–375 (RYSSNGNLET) are enriched in polar residues. Tyr-367 is modified (phosphotyrosine). Phosphoserine occurs at positions 368 and 369. Over residues 380 to 389 (APTKGKAGKG) the composition is skewed to basic residues. The segment covering 390 to 399 (KRTDPDHYET) has biased composition (basic and acidic residues). Tyr-397 and Tyr-401 each carry phosphotyrosine. Phosphothreonine; by PKC/PRKCH is present on Thr-402. Thr-403 carries the phosphothreonine modification. The residue at position 407 (Ser-407) is a Phosphoserine. Residues 413 to 521 (EDWVREYPPI…MVGDYDRRKP (109 aa)) form the OCEL domain. Positions 424-488 (SDQQRQLYKR…EYNRLKQVKG (65 aa)) form a coiled coil. Ser-489 carries the phosphoserine modification.

Belongs to the ELL/occludin family. Interacts with TJP1/ZO1. Interacts with VAPA. Interacts with CLDN1, CLDN6, CLDN9, CLDN11, CLDN12 and CLDN17. Interacts with PLSCR1. Interacts with LSR, ILDR1 and ILDR2. Interacts with TJP2/ZO2. Dephosphorylated by PTPRJ. May be phosphorylated by PKC during translocation to cell-cell contacts. Localized at tight junctions of both epithelial and endothelial cells. Highly expressed in the testis, kidney, lung, liver and brain. Not detected in skeletal muscle, spleen and heart.

The protein resides in the cell membrane. It localises to the cell junction. It is found in the tight junction. Functionally, may play a role in the formation and regulation of the tight junction (TJ) paracellular permeability barrier. The polypeptide is Occludin (Ocln) (Mus musculus (Mouse)).